The primary structure comprises 610 residues: Solute carrier family 2, facilitated glucose transporter member 12 (610 aa).

The Cytoplasmic portion of the chain corresponds to Met1 to Ser49. Residues Val50–Leu70 form a helical membrane-spanning segment. Over Gln71–Glu84 the chain is Extracellular. Residues Gln85 to Leu105 traverse the membrane as a helical segment. The Cytoplasmic segment spans residues Asp106–Ala118. The chain crosses the membrane as a helical span at residues Leu119 to Val139. Topologically, residues Gly140–Arg141 are extracellular. The chain crosses the membrane as a helical span at residues Met142 to Val162. Residues Ala163–Glu176 lie on the Cytoplasmic side of the membrane. A helical transmembrane segment spans residues Leu177–Pro197. At Asp198–Arg201 the chain is on the extracellular side. The chain crosses the membrane as a helical span at residues Phe202 to Pro222. At Asp223–Arg286 the chain is on the cytoplasmic side. Residues Leu287–Ala307 traverse the membrane as a helical segment. Over Tyr308 to Thr325 the chain is Extracellular. Residues Leu326–Val346 form a helical membrane-spanning segment. Residues Asp347–Ala353 lie on the Cytoplasmic side of the membrane. Residues Leu354–Met374 form a helical membrane-spanning segment. Residues Gln375 to Trp475 are Extracellular-facing. 3 N-linked (GlcNAc...) asparagine glycosylation sites follow: Asn392, Asn429, and Asn438. A helical transmembrane segment spans residues Ile476–Val496. The Cytoplasmic portion of the chain corresponds to His497–Lys511. A helical transmembrane segment spans residues Ala512–Leu532. Topologically, residues Thr533 to Thr542 are extracellular. Residues Val543–Pro563 form a helical membrane-spanning segment. The Cytoplasmic portion of the chain corresponds to Glu564 to Val610.

It belongs to the major facilitator superfamily. Sugar transporter (TC 2.A.1.1) family. Glucose transporter subfamily. As to expression, expressed in the main insulin-sensitive tissues, such as cardiac muscle, skeletal muscle and adipose tissue.

The protein resides in the cell membrane. It is found in the endomembrane system. It localises to the cytoplasm. Its subcellular location is the perinuclear region. The enzyme catalyses D-glucose(out) = D-glucose(in). Functionally, insulin-regulated facilitative glucose transporter. This Danio rerio (Zebrafish) protein is Solute carrier family 2, facilitated glucose transporter member 12.